A 317-amino-acid chain; its full sequence is Lipoyl synthase (317 aa).

Residues 1 to 21 (MVTVIDTLARPRHPEKANRPE) are disordered. The span at 12–21 (RHPEKANRPE) shows a compositional bias: basic and acidic residues. The [4Fe-4S] cluster site is built by Cys-57, Cys-62, Cys-68, Cys-83, Cys-87, Cys-90, and Ser-296. A Radical SAM core domain is found at 69-285 (WEKKHATFMI…ETVAYAKGFL (217 aa)).

The protein belongs to the radical SAM superfamily. Lipoyl synthase family. [4Fe-4S] cluster is required as a cofactor.

It is found in the cytoplasm. The catalysed reaction is [[Fe-S] cluster scaffold protein carrying a second [4Fe-4S](2+) cluster] + N(6)-octanoyl-L-lysyl-[protein] + 2 oxidized [2Fe-2S]-[ferredoxin] + 2 S-adenosyl-L-methionine + 4 H(+) = [[Fe-S] cluster scaffold protein] + N(6)-[(R)-dihydrolipoyl]-L-lysyl-[protein] + 4 Fe(3+) + 2 hydrogen sulfide + 2 5'-deoxyadenosine + 2 L-methionine + 2 reduced [2Fe-2S]-[ferredoxin]. The protein operates within protein modification; protein lipoylation via endogenous pathway; protein N(6)-(lipoyl)lysine from octanoyl-[acyl-carrier-protein]: step 2/2. In terms of biological role, catalyzes the radical-mediated insertion of two sulfur atoms into the C-6 and C-8 positions of the octanoyl moiety bound to the lipoyl domains of lipoate-dependent enzymes, thereby converting the octanoylated domains into lipoylated derivatives. In Xanthobacter autotrophicus (strain ATCC BAA-1158 / Py2), this protein is Lipoyl synthase.